The primary structure comprises 290 residues: NAD kinase (290 aa).

Aspartate 75 serves as the catalytic Proton acceptor. NAD(+) is bound by residues 75 to 76 (DG), 148 to 149 (NE), aspartate 178, 189 to 194 (TAYNIS), and glutamine 247.

The protein belongs to the NAD kinase family. A divalent metal cation is required as a cofactor.

The protein localises to the cytoplasm. It carries out the reaction NAD(+) + ATP = ADP + NADP(+) + H(+). Involved in the regulation of the intracellular balance of NAD and NADP, and is a key enzyme in the biosynthesis of NADP. Catalyzes specifically the phosphorylation on 2'-hydroxyl of the adenosine moiety of NAD to yield NADP. This is NAD kinase from Wolinella succinogenes (strain ATCC 29543 / DSM 1740 / CCUG 13145 / JCM 31913 / LMG 7466 / NCTC 11488 / FDC 602W) (Vibrio succinogenes).